A 425-amino-acid polypeptide reads, in one-letter code: Elongation factor 1-alpha (425 aa).

The tr-type G domain occupies 5–221; that stretch reads KPHMNLAVIG…NALSEPEKPT (217 aa). The interval 14–21 is G1; sequence GHIDHGKS. GTP is bound at residue 14-21; it reads GHIDHGKS. Residue Ser21 participates in Mg(2+) binding. A G2 region spans residues 70 to 74; that stretch reads GITID. Residues 91-94 form a G3 region; that stretch reads DCPG. GTP contacts are provided by residues 91–95 and 146–149; these read DCPGH and NKMD. Residues 146–149 are G4; it reads NKMD. The G5 stretch occupies residues 185 to 187; that stretch reads SAF.

Belongs to the TRAFAC class translation factor GTPase superfamily. Classic translation factor GTPase family. EF-Tu/EF-1A subfamily.

Its subcellular location is the cytoplasm. It carries out the reaction GTP + H2O = GDP + phosphate + H(+). Its function is as follows. GTP hydrolase that promotes the GTP-dependent binding of aminoacyl-tRNA to the A-site of ribosomes during protein biosynthesis. The sequence is that of Elongation factor 1-alpha from Methanoculleus marisnigri (strain ATCC 35101 / DSM 1498 / JR1).